The primary structure comprises 135 residues: Small ribosomal subunit protein uS11 (135 aa).

A compositionally biased stretch (polar residues) spans 1-10; that stretch reads MPPKSRTATA. Disordered stretches follow at residues 1 to 27 and 114 to 135; these read MPPK…HGHA and GAIQ…RRRV. The segment covering 12 to 27 has biased composition (basic residues); that stretch reads RKPRRKEKKNVAHGHA.

The protein belongs to the universal ribosomal protein uS11 family. In terms of assembly, part of the 30S ribosomal subunit. Interacts with proteins S7 and S18. Binds to IF-3.

Its function is as follows. Located on the platform of the 30S subunit, it bridges several disparate RNA helices of the 16S rRNA. Forms part of the Shine-Dalgarno cleft in the 70S ribosome. In Kineococcus radiotolerans (strain ATCC BAA-149 / DSM 14245 / SRS30216), this protein is Small ribosomal subunit protein uS11.